A 213-amino-acid chain; its full sequence is Putative transmembrane protein DDB_G0267860 (213 aa).

A signal peptide spans 1 to 22 (MKTKILLLNFIIIFFLINVNLA). At 23–191 (IKKDSPFKEI…SSKFDSSTSS (169 aa)) the chain is on the extracellular side. 2 N-linked (GlcNAc...) asparagine glycosylation sites follow: N92 and N114. A helical membrane pass occupies residues 192–212 (ISINTLAILSLLFLIFINKLI). A topological domain (cytoplasmic) is located at residue N213.

It is found in the membrane. This Dictyostelium discoideum (Social amoeba) protein is Putative transmembrane protein DDB_G0267860.